The following is a 271-amino-acid chain: tRNA (guanine-N(7)-)-methyltransferase (271 aa).

S-adenosyl-L-methionine-binding residues include Glu95, Glu120, Asp147, and Asp175. The active site involves Asp175. Residues Lys179, Asp211, and 249-252 (THFE) each bind substrate.

The protein belongs to the class I-like SAM-binding methyltransferase superfamily. TrmB family.

It catalyses the reaction guanosine(46) in tRNA + S-adenosyl-L-methionine = N(7)-methylguanosine(46) in tRNA + S-adenosyl-L-homocysteine. The protein operates within tRNA modification; N(7)-methylguanine-tRNA biosynthesis. Catalyzes the formation of N(7)-methylguanine at position 46 (m7G46) in tRNA. The sequence is that of tRNA (guanine-N(7)-)-methyltransferase from Rhodopirellula baltica (strain DSM 10527 / NCIMB 13988 / SH1).